Reading from the N-terminus, the 350-residue chain is UDP-N-acetylenolpyruvoylglucosamine reductase (350 aa).

The region spanning 24–195 (HVEATARWLL…VAVEFNLPLL (172 aa)) is the FAD-binding PCMH-type domain. Residue Arg172 is part of the active site. The active-site Proton donor is Ser245. Residue Glu342 is part of the active site.

This sequence belongs to the MurB family. Requires FAD as cofactor.

It localises to the cytoplasm. The enzyme catalyses UDP-N-acetyl-alpha-D-muramate + NADP(+) = UDP-N-acetyl-3-O-(1-carboxyvinyl)-alpha-D-glucosamine + NADPH + H(+). The protein operates within cell wall biogenesis; peptidoglycan biosynthesis. Functionally, cell wall formation. The chain is UDP-N-acetylenolpyruvoylglucosamine reductase from Xanthomonas euvesicatoria pv. vesicatoria (strain 85-10) (Xanthomonas campestris pv. vesicatoria).